The following is a 545-amino-acid chain: Chaperonin GroEL (545 aa).

Residues 30 to 33, Lys51, 87 to 91, Gly415, 479 to 481, and Asp495 contribute to the ATP site; these read TLGP, DGTTT, and NAA.

The protein belongs to the chaperonin (HSP60) family. In terms of assembly, forms a cylinder of 14 subunits composed of two heptameric rings stacked back-to-back. Interacts with the co-chaperonin GroES.

It is found in the cytoplasm. The enzyme catalyses ATP + H2O + a folded polypeptide = ADP + phosphate + an unfolded polypeptide.. Its function is as follows. Together with its co-chaperonin GroES, plays an essential role in assisting protein folding. The GroEL-GroES system forms a nano-cage that allows encapsulation of the non-native substrate proteins and provides a physical environment optimized to promote and accelerate protein folding. This Tolumonas auensis (strain DSM 9187 / NBRC 110442 / TA 4) protein is Chaperonin GroEL.